The following is a 284-amino-acid chain: uncharacterized protein (284 aa).

2 stretches are compositionally biased toward low complexity: residues 110 to 123 (NGPR…PNNG) and 130 to 149 (NGPM…NGPN). A disordered region spans residues 110-176 (NGPRGRQMNG…PNEFDSDDDD (67 aa)).

The protein localises to the virion. This is an uncharacterized protein from Acanthamoeba polyphaga mimivirus (APMV).